A 292-amino-acid chain; its full sequence is Inositol monophosphatase 2 (292 aa).

The Mg(2+) site is built by Glu75, Asp94, Ile96, Asp97, and Asp231. Glu75 is a binding site for substrate. Residues 96–99 (IDGT) and Asp231 contribute to the substrate site.

This sequence belongs to the inositol monophosphatase superfamily. The cofactor is Mg(2+).

It catalyses the reaction a myo-inositol phosphate + H2O = myo-inositol + phosphate. Its pathway is polyol metabolism; myo-inositol biosynthesis; myo-inositol from D-glucose 6-phosphate: step 2/2. With respect to regulation, inhibited by Li(+) and Na(+). Responsible for the provision of inositol required for synthesis of phosphatidylinositol and polyphosphoinositides and involved in the inositol cycle of calcium signaling. The polypeptide is Inositol monophosphatase 2 (INM2) (Saccharomyces cerevisiae (strain ATCC 204508 / S288c) (Baker's yeast)).